Reading from the N-terminus, the 271-residue chain is Glutamate 5-kinase (271 aa).

Position 14 (Lys14) interacts with ATP. Residues Ser54, Asp141, and Asn157 each contribute to the substrate site. ATP is bound by residues 177-178 and 219-225; these read SD and TGGMSSK.

Belongs to the glutamate 5-kinase family.

It is found in the cytoplasm. It carries out the reaction L-glutamate + ATP = L-glutamyl 5-phosphate + ADP. Its pathway is amino-acid biosynthesis; L-proline biosynthesis; L-glutamate 5-semialdehyde from L-glutamate: step 1/2. Functionally, catalyzes the transfer of a phosphate group to glutamate to form L-glutamate 5-phosphate. The chain is Glutamate 5-kinase from Enterococcus faecalis (strain ATCC 700802 / V583).